The chain runs to 478 residues: Zinc finger C3HC-type protein 1-like (478 aa).

The segment at 93 to 147 adopts a C3HC-type zinc-finger fold; sequence CAKYGWSNIECDMLKCSSCNAYLCASLQPVLDFSKYKQRCVELQEALRKAHEKFC. The interval 285–389 is disordered; the sequence is LSAPNTPVSP…SSSSDTSPRG (105 aa). Residues 351–363 are compositionally biased toward polar residues; sequence SMGQGESSGLSNE. Residues 377 to 388 show a composition bias toward low complexity; it reads LCSSSSSDTSPR.

In terms of processing, phosphorylated. May also be weakly phosphorylated on Tyr residues.

It is found in the nucleus. The protein resides in the nucleus envelope. Functionally, required for proper positioning of a substantial amount of TPR at the nuclear basket (NB) through interaction with TPR. This is Zinc finger C3HC-type protein 1-like (zc3hc1) from Xenopus tropicalis (Western clawed frog).